A 510-amino-acid chain; its full sequence is Nectin-4 (510 aa).

The first 31 residues, 1–31, serve as a signal peptide directing secretion; it reads MPLSLGAEMWGPAAWLLLLLLLASFTGQRLA. In terms of domain architecture, Ig-like V-type spans 32–144; it reads GELETSDLVT…GSFQARLRLR (113 aa). Residues 32-349 lie on the Extracellular side of the membrane; the sequence is GELETSDLVT…GKQVDLVSAS (318 aa). 3 cysteine pairs are disulfide-bonded: C52/C127, C171/C223, and C270/C315. Ig-like C2-type domains lie at 148-237 and 248-331; these read PPLP…QRIT and ASVR…VVVD. N-linked (GlcNAc...) asparagine glycosylation occurs at N281. The helical transmembrane segment at 350–370 threads the bilayer; sequence VVVVGVIAALLFCLLVVVVVL. The Cytoplasmic portion of the chain corresponds to 371-510; sequence MSRYHRRKAQ…IYINGRGHLV (140 aa). The segment covering 400–412 has biased composition (basic and acidic residues); sequence RLHSHHSDPRNQP. The tract at residues 400–475 is disordered; it reads RLHSHHSDPR…GRAEEEEDRD (76 aa).

Belongs to the nectin family. In terms of assembly, self-associates. Interacts via its Ig-like V-type domain with NECTIN1 Ig-like V-type domain. Interacts via its C-terminus with AFDN. Interacts with TIGIT.

The protein resides in the cell membrane. It is found in the cell junction. Its subcellular location is the adherens junction. In terms of biological role, seems to be involved in cell adhesion through trans-homophilic and -heterophilic interactions, the latter including specifically interactions with NECTIN1. Plays a role in the senescence-associated cell size enlargement via SFK/PI3K/Rac1 and thus promotes senescent cell survival. Also participates in the innate immune response by acting as a ligand for the receptor TIGIT to inhibit NK-cell activity. This is Nectin-4 from Bos taurus (Bovine).